Consider the following 1107-residue polypeptide: Unconventional myosin-Ib (1107 aa).

One can recognise a Myosin motor domain in the interval 15-701; the sequence is IGVGDMVLLE…TLFQLEDLRK (687 aa). Ser60 bears the Phosphoserine mark. 108–115 contributes to the ATP binding site; it reads GESGAGKT. Residue Lys287 forms a Glycyl lysine isopeptide (Lys-Gly) (interchain with G-Cter in SUMO1); alternate linkage. Lys287 participates in a covalent cross-link: Glycyl lysine isopeptide (Lys-Gly) (interchain with G-Cter in SUMO2); alternate. The interval 592–599 is actin-binding; the sequence is YIRCIKPN. IQ domains lie at 704–727, 728–749, 750–778, 780–807, and 808–837; these read LEDL…FLLM, KRSQ…RYQQ, IKSS…HQKR, KEAA…EEAR, and RKHA…ANAG. The TH1 domain occupies 923–1107; that stretch reads KALYPSSVGQ…NNRLLEVAVP (185 aa).

This sequence belongs to the TRAFAC class myosin-kinesin ATPase superfamily. Myosin family. As to expression, prominent expression is seen in the brain, lung and liver. It is also expressed in the heart and testis. A high level expression is seen in virtually all neurons (but not glia) in the postnatal and adult mouse brain and in neuroblasts of the cerebellar external granular layer.

Motor protein that may participate in process critical to neuronal development and function such as cell migration, neurite outgrowth and vesicular transport. The protein is Unconventional myosin-Ib (Myo1b) of Mus musculus (Mouse).